A 380-amino-acid chain; its full sequence is tRNA-specific 2-thiouridylase MnmA (380 aa).

ATP contacts are provided by residues 25–32 (AMSGGVDS) and M51. Residue C119 is the Nucleophile of the active site. C119 and C216 form a disulfide bridge. Residue G143 participates in ATP binding. Positions 166–168 (KDQ) are interaction with tRNA. C216 functions as the Cysteine persulfide intermediate in the catalytic mechanism. Residues 320 to 321 (RY) form an interaction with tRNA region.

It belongs to the MnmA/TRMU family.

It localises to the cytoplasm. It catalyses the reaction S-sulfanyl-L-cysteinyl-[protein] + uridine(34) in tRNA + AH2 + ATP = 2-thiouridine(34) in tRNA + L-cysteinyl-[protein] + A + AMP + diphosphate + H(+). Functionally, catalyzes the 2-thiolation of uridine at the wobble position (U34) of tRNA, leading to the formation of s(2)U34. This is tRNA-specific 2-thiouridylase MnmA from Deinococcus radiodurans (strain ATCC 13939 / DSM 20539 / JCM 16871 / CCUG 27074 / LMG 4051 / NBRC 15346 / NCIMB 9279 / VKM B-1422 / R1).